The chain runs to 338 residues: Lipoate-protein ligase A (338 aa).

In terms of domain architecture, BPL/LPL catalytic spans 29–216 (PATQRVLFLW…AFFAHYGERV (188 aa)). ATP contacts are provided by residues Arg71, 76-79 (GAVF), and Lys134. Lys134 serves as a coordination point for (R)-lipoate.

This sequence belongs to the LplA family. In terms of assembly, monomer.

The protein resides in the cytoplasm. It catalyses the reaction L-lysyl-[lipoyl-carrier protein] + (R)-lipoate + ATP = N(6)-[(R)-lipoyl]-L-lysyl-[lipoyl-carrier protein] + AMP + diphosphate + H(+). The protein operates within protein modification; protein lipoylation via exogenous pathway; protein N(6)-(lipoyl)lysine from lipoate: step 1/2. It functions in the pathway protein modification; protein lipoylation via exogenous pathway; protein N(6)-(lipoyl)lysine from lipoate: step 2/2. Catalyzes both the ATP-dependent activation of exogenously supplied lipoate to lipoyl-AMP and the transfer of the activated lipoyl onto the lipoyl domains of lipoate-dependent enzymes. This chain is Lipoate-protein ligase A, found in Escherichia coli O6:H1 (strain CFT073 / ATCC 700928 / UPEC).